Consider the following 67-residue polypeptide: MNNNNVYSLNNFDFLARSFARMQAEGRPVDIQAVTGNMDEEHRDWFCKRYALYCQQATQAKKLELEH.

The protein belongs to the GlgS family.

Its function is as follows. Major determinant of cell surface composition. Negatively regulates motility, adhesion and synthesis of biofilm exopolysaccharides. The sequence is that of Surface composition regulator from Salmonella paratyphi A (strain ATCC 9150 / SARB42).